Consider the following 346-residue polypeptide: Phosphoribosylformylglycinamidine cyclo-ligase (346 aa).

This sequence belongs to the AIR synthase family.

Its subcellular location is the cytoplasm. It catalyses the reaction 2-formamido-N(1)-(5-O-phospho-beta-D-ribosyl)acetamidine + ATP = 5-amino-1-(5-phospho-beta-D-ribosyl)imidazole + ADP + phosphate + H(+). The protein operates within purine metabolism; IMP biosynthesis via de novo pathway; 5-amino-1-(5-phospho-D-ribosyl)imidazole from N(2)-formyl-N(1)-(5-phospho-D-ribosyl)glycinamide: step 2/2. The polypeptide is Phosphoribosylformylglycinamidine cyclo-ligase (Bacillus cereus (strain B4264)).